The chain runs to 786 residues: Cyclin-F (786 aa).

The Nuclear localization signal 1 signature appears at 20-28; the sequence is KRRIRRRPR. The F-box domain maps to 29–76; it reads NLTILSLPEDVLFHILKWLSVEDILAVRAVHSQLKDLVDNHASVWACA. A Cyclin N-terminal domain is found at 288–405; it reads QASQAVSKQQ…EIVSALEGKI (118 aa). 4 short sequence motifs (d box) span residues 310 to 313, 343 to 346, 349 to 352, and 351 to 354; these read RYIL, RRRL, RYRL, and RLQL. Disordered regions lie at residues 564–593 and 675–738; these read SPSG…TAEL and TQIP…HTQP. The short motif at 568–574 is the Nuclear localization signal 2 element; that stretch reads RRTKRKR. The interval 582 to 766 is PEST; the sequence is RGSFVTTPTA…ESSVPQQQVK (185 aa). The span at 697–714 shows a compositional bias: low complexity; it reads VTTSGYSSVSTASPTSSV. The span at 723–738 shows a compositional bias: polar residues; that stretch reads QPTSVLSLDSDSHTQP. The D box 5 motif lies at 767–770; the sequence is RINL.

This sequence belongs to the cyclin family. Cyclin AB subfamily. In terms of assembly, component of the SCF(CCNF) complex consisting of CUL1, RBX1, SKP1 and CCNF. Interacts with SKP1. Interacts with CUL1. Interacts with CCNB1; interaction is required for nuclear localization of CCNB1. Interacts with CCP110; this interaction leads to CCP110 ubiquitination and degradation via the proteasome pathway. Interacts (via the Cyclin N-terminal domain) with MYBL2/BMYB. Interacts with FZR1/CDH1 (via N-terminus). Interacts with RRM2 (via Cy motif and when phosphorylated at 'Thr-33'); the interaction occurs exclusively in G2 and early M. Interacts with CDC6 (via Cy motif); the interaction takes place during G2 and M phase. Degraded when the spindle assembly checkpoint is activated during the G2-M transition. Degradation depends on the C-terminal PEST sequence. In terms of processing, phosphorylated just before cells enter into mitosis. Post-translationally, ubiquitinated by the anaphase-promoting complex (APC/C); leading to its degradation by the proteasome. As to expression, widely expressed, with expression detected in the heart, brain, placenta, lung, liver, skeletal muscle, kidney and pancreas.

The protein resides in the nucleus. Its subcellular location is the cytoplasm. It localises to the perinuclear region. The protein localises to the cytoskeleton. It is found in the microtubule organizing center. The protein resides in the centrosome. Its subcellular location is the centriole. Substrate recognition component of a SCF (SKP1-CUL1-F-box protein) E3 ubiquitin-protein ligase complex which mediates the ubiquitination and subsequent proteasomal degradation of target proteins. The SCF(CCNF) E3 ubiquitin-protein ligase complex is an integral component of the ubiquitin proteasome system (UPS) and links proteasome degradation to the cell cycle. Mediates the substrate recognition and the proteasomal degradation of various target proteins involved in the regulation of cell cycle progression and in the maintenance of genome stability. Mediates the ubiquitination and proteasomal degradation of CP110 during G2 phase, thereby acting as an inhibitor of centrosome reduplication. In G2, mediates the ubiquitination and subsequent degradation of ribonucleotide reductase RRM2, thereby maintaining a balanced pool of dNTPs and genome integrity. In G2, mediates the ubiquitination and proteasomal degradation of CDC6, thereby suppressing DNA re-replication and preventing genome instability. Involved in the ubiquitination and degradation of the substrate adapter CDH1 of the anaphase-promoting complex (APC/C), thereby acting as an antagonist of APC/C in regulating G1 progression and S phase entry. May play a role in the G2 cell cycle checkpoint control after DNA damage, possibly by promoting the ubiquitination of MYBL2/BMYB. The sequence is that of Cyclin-F (CCNF) from Homo sapiens (Human).